A 185-amino-acid polypeptide reads, in one-letter code: Elongation factor P (185 aa).

The protein belongs to the elongation factor P family.

The protein resides in the cytoplasm. Its pathway is protein biosynthesis; polypeptide chain elongation. In terms of biological role, involved in peptide bond synthesis. Stimulates efficient translation and peptide-bond synthesis on native or reconstituted 70S ribosomes in vitro. Probably functions indirectly by altering the affinity of the ribosome for aminoacyl-tRNA, thus increasing their reactivity as acceptors for peptidyl transferase. The sequence is that of Elongation factor P from Listeria innocua serovar 6a (strain ATCC BAA-680 / CLIP 11262).